Reading from the N-terminus, the 466-residue chain is Cysteine--tRNA ligase (466 aa).

Cys-33 contacts Zn(2+). The 'HIGH' region signature appears at 35–45 (PTVYDYAHIGN). Cys-221, His-246, and Glu-250 together coordinate Zn(2+). The 'KMSKS' region motif lies at 279-283 (KMSKS). ATP is bound at residue Lys-282.

It belongs to the class-I aminoacyl-tRNA synthetase family. Monomer. Zn(2+) serves as cofactor.

Its subcellular location is the cytoplasm. It catalyses the reaction tRNA(Cys) + L-cysteine + ATP = L-cysteinyl-tRNA(Cys) + AMP + diphosphate. The protein is Cysteine--tRNA ligase of Rhizobium meliloti (strain 1021) (Ensifer meliloti).